The chain runs to 393 residues: Mitogen-activated protein kinase SIPK (393 aa).

Polar residues predominate over residues 1–11; it reads MDGSGQQTDTM. The segment at 1–31 is disordered; it reads MDGSGQQTDTMMSDAGAEQPPPAPQPVAGMD. The Protein kinase domain occupies 60–345; that stretch reads KPPILPIGKG…VEGALAHPYL (286 aa). Residues 66–74 and Lys-89 contribute to the ATP site; that span reads IGKGAYGIV. The active-site Proton acceptor is the Asp-186. Residues 218–220 carry the TXY motif; sequence TEY.

It belongs to the protein kinase superfamily. CMGC Ser/Thr protein kinase family. MAP kinase subfamily. In terms of assembly, interacts with SIPKK.

It catalyses the reaction L-tyrosyl-[protein] + ATP = O-phospho-L-tyrosyl-[protein] + ADP + H(+). The enzyme catalyses L-seryl-[protein] + ATP = O-phospho-L-seryl-[protein] + ADP + H(+). It carries out the reaction L-threonyl-[protein] + ATP = O-phospho-L-threonyl-[protein] + ADP + H(+). Its activity is regulated as follows. Activated by threonine and tyrosine phosphorylation. Phosphorylates myelin basic protein (MBP) in vitro. May be involved in disease resistance. The polypeptide is Mitogen-activated protein kinase SIPK (Nicotiana tabacum (Common tobacco)).